The following is a 145-amino-acid chain: UPF0763 protein WS1752 (145 aa).

The protein belongs to the UPF0763 family.

This is UPF0763 protein WS1752 from Wolinella succinogenes (strain ATCC 29543 / DSM 1740 / CCUG 13145 / JCM 31913 / LMG 7466 / NCTC 11488 / FDC 602W) (Vibrio succinogenes).